A 265-amino-acid polypeptide reads, in one-letter code: Short-chain dehydrogenase/reductase fsr5 (265 aa).

Positions 1 to 32 (MASLGKYVSKLAGSRVLVIGGSSGIGFGVAEA) are cleaved as a signal peptide. NADP(+)-binding residues include S22, S23, I25, S45, and K50. N-linked (GlcNAc...) asparagine glycosylation is present at N62. Positions 88, 130, and 204 each coordinate NADP(+). N218 and N250 each carry an N-linked (GlcNAc...) asparagine glycan.

The protein belongs to the short-chain dehydrogenases/reductases (SDR) family.

In terms of biological role, short-chain dehydrogenase/reductase; part of the gene cluster that mediates the biosynthesis of fusarubins, highly pigmented naphthoquinones responsible for the coloration of the fruiting bodies. The non-reducing polyketide synthase FSR1 is responsible for the condensation of seven acetyl-CoA units to yield a haptaketide. After rings A and B are formed by aldol-type cyclization, the PKS-derived product is released as 6-O-demethylfusarubinaldehyde. Then, two hydroxyl groups at C-5 and C-10 are incorporated by FSR3, and simultaneously hydroxyl groups at C-6 and C-8 are methylated by FSR2. The aldehyde is, on the one hand, reduced by FSR3 to 8-O-methylfusarubin alcohol, which equilibrates mainly with 8-O-methylfusarubin and only small amounts of 8-O-methylnectriafurone. On the other hand, the aldehyde can be oxidized to form 8-O-methylfusarubinic acid, a reaction driven by FSR3 equilibrating with 8-O-methylfusarubinlactone, finally resulting in 8-O-methylanhydrofusarubinlactol after a further reduction step and loss of water. 8-O-Methylfusarubinic acid can also undergo decarboxylation, resulting in 8-O-methyl-13-hydroxynorjavanicin after another hydroxylation step at C-13. Both steps are most likely also accomplished by FSR3. No enzymatic function has been determined so far for either FSR4 and FSR5. Their deletion does not alter the product spectrum, but the possibility that they catalyze specific enzymatic steps during perithecium development cannot be ruled out. FSR4 might possess a regulatory function in the biosynthesis of fusarubins. In Gibberella fujikuroi (strain CBS 195.34 / IMI 58289 / NRRL A-6831) (Bakanae and foot rot disease fungus), this protein is Short-chain dehydrogenase/reductase fsr5.